The primary structure comprises 546 residues: Mitochondrial distribution and morphology protein 34 (546 aa).

The SMP-LTD domain occupies 1-195 (MAFNFNWSPL…LPAIIHRLSL (195 aa)). Disordered regions lie at residues 208–230 (EVKADEEAGPGQDPLLSPPQDPV), 299–319 (SHGGLISPASPPLSRTHSHVA), 344–382 (TMGAGRHPRTRPSRKHKRRVVDLRKPQKLDDTSSTCTDS), 395–416 (SSSARVGEKPDDPITPPVSPDA), and 517–546 (RRIQEGKGPGSVGSNYCGRRDPSPPPAYGQ). A compositionally biased stretch (basic residues) spans 349-362 (RHPRTRPSRKHKRR). Positions 363–374 (VVDLRKPQKLDD) are enriched in basic and acidic residues.

This sequence belongs to the MDM34 family. As to quaternary structure, component of the ER-mitochondria encounter structure (ERMES) or MDM complex, composed of MMM1, MDM10, MDM12 and MDM34.

It localises to the mitochondrion outer membrane. Functionally, component of the ERMES/MDM complex, which serves as a molecular tether to connect the endoplasmic reticulum (ER) and mitochondria. Components of this complex are involved in the control of mitochondrial shape and protein biogenesis, and function in nonvesicular lipid trafficking between the ER and mitochondria. MDM34 is required for the interaction of the ER-resident membrane protein MMM1 and the outer mitochondrial membrane-resident beta-barrel protein MDM10. The sequence is that of Mitochondrial distribution and morphology protein 34 from Arthroderma otae (strain ATCC MYA-4605 / CBS 113480) (Microsporum canis).